The following is a 367-amino-acid chain: Glutamate 5-kinase (367 aa).

Lys10 contributes to the ATP binding site. Substrate is bound by residues Ser50, Asp137, and Asn149. ATP is bound by residues 169 to 170 (TD) and 211 to 217 (TGGMSTK). Residues 275 to 353 (AGEITVDEGA…QEIDAILGYE (79 aa)) form the PUA domain.

It belongs to the glutamate 5-kinase family.

It is found in the cytoplasm. It carries out the reaction L-glutamate + ATP = L-glutamyl 5-phosphate + ADP. The protein operates within amino-acid biosynthesis; L-proline biosynthesis; L-glutamate 5-semialdehyde from L-glutamate: step 1/2. Functionally, catalyzes the transfer of a phosphate group to glutamate to form L-glutamate 5-phosphate. This is Glutamate 5-kinase from Shigella flexneri.